The chain runs to 331 residues: Ketol-acid reductoisomerase (NADP(+)) (331 aa).

A KARI N-terminal Rossmann domain is found at 1-181 (MKVYYEKDAN…GGSRSGVIET (181 aa)). NADP(+)-binding positions include 24–27 (YGSQ), Arg47, and 82–85 (DQVQ). Residue His107 is part of the active site. Gly133 provides a ligand contact to NADP(+). The region spanning 182–327 (TFREETETDL…GELRGMMPWL (146 aa)) is the KARI C-terminal knotted domain. Mg(2+)-binding residues include Asp190, Glu194, Glu226, and Glu230. Ser251 contacts substrate.

It belongs to the ketol-acid reductoisomerase family. Mg(2+) is required as a cofactor.

It carries out the reaction (2R)-2,3-dihydroxy-3-methylbutanoate + NADP(+) = (2S)-2-acetolactate + NADPH + H(+). The catalysed reaction is (2R,3R)-2,3-dihydroxy-3-methylpentanoate + NADP(+) = (S)-2-ethyl-2-hydroxy-3-oxobutanoate + NADPH + H(+). Its pathway is amino-acid biosynthesis; L-isoleucine biosynthesis; L-isoleucine from 2-oxobutanoate: step 2/4. It participates in amino-acid biosynthesis; L-valine biosynthesis; L-valine from pyruvate: step 2/4. In terms of biological role, involved in the biosynthesis of branched-chain amino acids (BCAA). Catalyzes an alkyl-migration followed by a ketol-acid reduction of (S)-2-acetolactate (S2AL) to yield (R)-2,3-dihydroxy-isovalerate. In the isomerase reaction, S2AL is rearranged via a Mg-dependent methyl migration to produce 3-hydroxy-3-methyl-2-ketobutyrate (HMKB). In the reductase reaction, this 2-ketoacid undergoes a metal-dependent reduction by NADPH to yield (R)-2,3-dihydroxy-isovalerate. The protein is Ketol-acid reductoisomerase (NADP(+)) of Nitratidesulfovibrio vulgaris (strain ATCC 29579 / DSM 644 / CCUG 34227 / NCIMB 8303 / VKM B-1760 / Hildenborough) (Desulfovibrio vulgaris).